A 383-amino-acid chain; its full sequence is MTSSPTVNLLDLDAQGLVAYCDSLGEKPFRAKQLQRWIHQYNAADFDGMTDLAKSLREKLKGRATISMPGIVSDNISTDGTRKWLIDVGNSNAVETVYIPEETRGTLCVSSQAGCAVNCRFCSTGKQGFSRNLTTAEIIGQLRMAEFALRASRGIDGGRATGGDGKGERVVTNVVMMGMGEPLLNYDAVVPAMRLMLDDNAYGLSRRRVTLSTSGVVPMMDRLGADLPVALAVSLHAPSDPLRDMLVPLNKKYPLRELMAACQRYLKVAPRDFITFEYCMLDGVNDSEAQARELLALTRDVPCKFNLIPFNPFPESGLIRSKPEQIKRFAQVLMDAGVVTTVRKTRGDDIDAACGQLAGAVKDRTRLAERTGKAAKVIEVRAV.

The Proton acceptor role is filled by Glu95. The 249-residue stretch at 101-349 folds into the Radical SAM core domain; it reads EETRGTLCVS…TTVRKTRGDD (249 aa). Cysteines 108 and 354 form a disulfide. [4Fe-4S] cluster is bound by residues Cys115, Cys119, and Cys122. Residues 180 to 181, Ser212, 234 to 236, and Asn311 each bind S-adenosyl-L-methionine; these read GE and SLH. Catalysis depends on Cys354, which acts as the S-methylcysteine intermediate.

The protein belongs to the radical SAM superfamily. RlmN family. Requires [4Fe-4S] cluster as cofactor.

The protein resides in the cytoplasm. It carries out the reaction adenosine(2503) in 23S rRNA + 2 reduced [2Fe-2S]-[ferredoxin] + 2 S-adenosyl-L-methionine = 2-methyladenosine(2503) in 23S rRNA + 5'-deoxyadenosine + L-methionine + 2 oxidized [2Fe-2S]-[ferredoxin] + S-adenosyl-L-homocysteine. The catalysed reaction is adenosine(37) in tRNA + 2 reduced [2Fe-2S]-[ferredoxin] + 2 S-adenosyl-L-methionine = 2-methyladenosine(37) in tRNA + 5'-deoxyadenosine + L-methionine + 2 oxidized [2Fe-2S]-[ferredoxin] + S-adenosyl-L-homocysteine. Specifically methylates position 2 of adenine 2503 in 23S rRNA and position 2 of adenine 37 in tRNAs. m2A2503 modification seems to play a crucial role in the proofreading step occurring at the peptidyl transferase center and thus would serve to optimize ribosomal fidelity. The protein is Dual-specificity RNA methyltransferase RlmN of Paraburkholderia phytofirmans (strain DSM 17436 / LMG 22146 / PsJN) (Burkholderia phytofirmans).